A 308-amino-acid polypeptide reads, in one-letter code: Protein translocase subunit SecF (308 aa).

The next 6 membrane-spanning stretches (helical) occupy residues 28–48 (SIIL…NFGI), 140–160 (IEAG…YIWV), 164–184 (WYFG…ALGF), 194–214 (LSTI…SVVI), 246–266 (ILTV…GGEA), and 272–292 (VLVF…SAPI).

The protein belongs to the SecD/SecF family. SecF subfamily. In terms of assembly, forms a complex with SecD. Part of the essential Sec protein translocation apparatus which comprises SecA, SecYEG and auxiliary proteins SecDF-YajC and YidC.

It localises to the cell inner membrane. In terms of biological role, part of the Sec protein translocase complex. Interacts with the SecYEG preprotein conducting channel. SecDF uses the proton motive force (PMF) to complete protein translocation after the ATP-dependent function of SecA. The protein is Protein translocase subunit SecF of Rickettsia conorii (strain ATCC VR-613 / Malish 7).